A 426-amino-acid chain; its full sequence is Glutamate-1-semialdehyde 2,1-aminomutase (426 aa).

K265 carries the N6-(pyridoxal phosphate)lysine modification.

The protein belongs to the class-III pyridoxal-phosphate-dependent aminotransferase family. HemL subfamily. In terms of assembly, homodimer. The cofactor is pyridoxal 5'-phosphate.

It is found in the cytoplasm. The catalysed reaction is (S)-4-amino-5-oxopentanoate = 5-aminolevulinate. The protein operates within porphyrin-containing compound metabolism; protoporphyrin-IX biosynthesis; 5-aminolevulinate from L-glutamyl-tRNA(Glu): step 2/2. In Salmonella schwarzengrund (strain CVM19633), this protein is Glutamate-1-semialdehyde 2,1-aminomutase.